A 120-amino-acid chain; its full sequence is ATP-dependent Clp protease adapter protein ClpS (120 aa).

This sequence belongs to the ClpS family. Binds to the N-terminal domain of the chaperone ClpA.

Its function is as follows. Involved in the modulation of the specificity of the ClpAP-mediated ATP-dependent protein degradation. The polypeptide is ATP-dependent Clp protease adapter protein ClpS (Azotobacter vinelandii (strain DJ / ATCC BAA-1303)).